A 437-amino-acid chain; its full sequence is 23S rRNA (uracil(1939)-C(5))-methyltransferase RlmD (437 aa).

The TRAM domain maps to 10–68 (SAPRNTTFVAEILDLDYQGRGVAKVQGKTWFIENALPQEKVEVRIVDEKRHYGHGISCK). [4Fe-4S] cluster-binding residues include Cys81, Cys87, Cys90, and Cys167. 6 residues coordinate S-adenosyl-L-methionine: Gln270, Phe299, Asn304, Glu320, Asn347, and Asp368. The active-site Nucleophile is Cys394.

It belongs to the class I-like SAM-binding methyltransferase superfamily. RNA M5U methyltransferase family. RlmD subfamily.

It carries out the reaction uridine(1939) in 23S rRNA + S-adenosyl-L-methionine = 5-methyluridine(1939) in 23S rRNA + S-adenosyl-L-homocysteine + H(+). Functionally, catalyzes the formation of 5-methyl-uridine at position 1939 (m5U1939) in 23S rRNA. The polypeptide is 23S rRNA (uracil(1939)-C(5))-methyltransferase RlmD (Pasteurella multocida (strain Pm70)).